The primary structure comprises 437 residues: Putative ankyrin repeat protein FPV014 (437 aa).

ANK repeat units follow at residues 32-61 (YGCS…NPDL), 65-94 (STPT…DPDN), 99-128 (ESRT…DAED), 131-160 (RFNC…RINS), 164-195 (GSVY…DVED), 197-226 (LSFS…SVDV), and 230-259 (CGRT…DTSV).

This is Putative ankyrin repeat protein FPV014 from Fowlpox virus (strain NVSL) (FPV).